Reading from the N-terminus, the 270-residue chain is MAVGKNKGLSKGGKKGVKKKIVDPFTRKDWYDVKAPTMYTVRNIGKTFVNRTQGTKIASEGLKGRVFEVSQADLTNGEDAYRKFRLIAEEVQGRNVLTNFHGMDLTTDKLRSMVKKWQTLIEATVDVRTTDGYLLRMFCIGFTKKCANQLKKTCYAQHNQVRLIRKKMTEMMVVEVSSSNLKDVVNKLIPGSIGKDIEKSCQHIYPLHDVLIRKVKVLKKPKFELGKLLELHGEGTSKGGAASTAAVAKGEEGVKVDRPEGYEPPVLETV.

Residues 235 to 270 (GTSKGGAASTAAVAKGEEGVKVDRPEGYEPPVLETV) are disordered. Over residues 239-248 (GGAASTAAVA) the composition is skewed to low complexity. The segment covering 249–261 (KGEEGVKVDRPEG) has biased composition (basic and acidic residues).

The protein belongs to the eukaryotic ribosomal protein eS1 family. As to quaternary structure, component of the small ribosomal subunit. Mature ribosomes consist of a small (40S) and a large (60S) subunit. The 40S subunit contains about 33 different proteins and 1 molecule of RNA (18S). The 60S subunit contains about 49 different proteins and 3 molecules of RNA (28S, 5.8S and 5S).

The protein localises to the cytoplasm. The sequence is that of Small ribosomal subunit protein eS1 from Ixodes scapularis (Black-legged tick).